The chain runs to 317 residues: Melanocyte-stimulating hormone receptor (317 aa).

Residues 1-37 are Extracellular-facing; sequence MPMQGAQRRLLGSLNSTPTATPNLGLAANHTGAPCLE. A glycan (N-linked (GlcNAc...) asparagine) is linked at Asn-29. A helical transmembrane segment spans residues 38 to 63; sequence VSIPHGLFLSLGLVSLVENVLVVAAI. Residues 64 to 72 are Cytoplasmic-facing; sequence AKNRNLHSP. Residues 73 to 93 traverse the membrane as a helical segment; the sequence is MYCFICCLALSDLLVSGSNML. The Extracellular segment spans residues 94 to 118; it reads ETAVILLLEAGALATRASVVQQLQN. The chain crosses the membrane as a helical span at residues 119–140; that stretch reads TIDVLTCSSMLCSLCFLGAIAV. The Cytoplasmic portion of the chain corresponds to 141 to 163; the sequence is DRYVSIFYALRYHSIVTLPRARR. The chain crosses the membrane as a helical span at residues 164-183; sequence AIAAIWVASVLSSTLFIAYC. Residues 184-191 are Extracellular-facing; the sequence is DHAAVLLC. Residues 192–211 traverse the membrane as a helical segment; it reads LVVFFLAMLVLMAVLYVHML. Over 212-240 the chain is Cytoplasmic; that stretch reads ARACQHAQGITRLHKRQLPAHQGFGLRGA. The chain crosses the membrane as a helical span at residues 241–266; it reads ATLTILLGIFFLCWGPFFLHLMLVVL. At 267-279 the chain is on the extracellular side; it reads CPQHLTCSCIFKN. A helical transmembrane segment spans residues 280–300; that stretch reads FKVFLTLIICNTIIDPLIYAF. Topologically, residues 301 to 317 are cytoplasmic; the sequence is RSQELCRTLKEVLLCSW. Cys-315 carries S-palmitoyl cysteine lipidation.

This sequence belongs to the G-protein coupled receptor 1 family. In terms of assembly, interacts with MGRN1, but does not undergo MGRN1-mediated ubiquitination; this interaction competes with GNAS-binding and thus inhibits agonist-induced cAMP production. Interacts with OPN3; the interaction results in a decrease in MC1R-mediated cAMP signaling and ultimately a decrease in melanin production in melanocytes.

The protein localises to the cell membrane. In terms of biological role, receptor for MSH (alpha, beta and gamma) and ACTH. The activity of this receptor is mediated by G proteins which activate adenylate cyclase. Mediates melanogenesis, the production of eumelanin (black/brown) and phaeomelanin (red/yellow), via regulation of cAMP signaling in melanocytes. This chain is Melanocyte-stimulating hormone receptor (MC1R), found in Alouatta caraya (Black howler monkey).